The following is a 125-amino-acid chain: MPTFNQLIRHGREEKRRTDRTRALDQCPQKQGVCLRVLTITPKKPNSALRKIAKVRLTNRHDIFAYIPGEGHNSQEHSIVLVRGGRVKDLPGVKFHCIRGVKDLLGIPDRRRGRSKYGAEKPKSK.

Belongs to the universal ribosomal protein uS12 family.

The protein resides in the mitochondrion. In terms of biological role, protein S12 is involved in the translation initiation step. This chain is Small ribosomal subunit protein uS12m (RPS12), found in Allium cepa (Onion).